We begin with the raw amino-acid sequence, 426 residues long: Phosphoribosylamine--glycine ligase (426 aa).

The 204-residue stretch at Lys-109–Thr-312 folds into the ATP-grasp domain. Position 138-193 (Leu-138–Ser-193) interacts with ATP. Mg(2+) contacts are provided by Glu-282 and Asn-284.

It belongs to the GARS family. The cofactor is Mg(2+). Requires Mn(2+) as cofactor.

It catalyses the reaction 5-phospho-beta-D-ribosylamine + glycine + ATP = N(1)-(5-phospho-beta-D-ribosyl)glycinamide + ADP + phosphate + H(+). The protein operates within purine metabolism; IMP biosynthesis via de novo pathway; N(1)-(5-phospho-D-ribosyl)glycinamide from 5-phospho-alpha-D-ribose 1-diphosphate: step 2/2. The protein is Phosphoribosylamine--glycine ligase of Corynebacterium ammoniagenes (Brevibacterium ammoniagenes).